A 532-amino-acid chain; its full sequence is Flavin-containing monooxygenase 1 (532 aa).

Position 2 is an N-acetylalanine (alanine 2). Topologically, residues 2 to 510 are lumenal; the sequence is AKRVAIVGAG…TRIVQESPTP (509 aa). Residues 9–13, glutamate 32, 40–41, and 61–62 each bind FAD; these read GAGVS, LW, and NS. NADP(+) contacts are provided by residues 60–61 and 195–198; these read SN and SGTD. The chain crosses the membrane as a helical span at residues 511–531; sequence FASLLKLLSLLALLMAIFLIF. Position 532 (leucine 532) is a topological domain, cytoplasmic.

The protein belongs to the FMO family. It depends on FAD as a cofactor. As to expression, liver.

It localises to the endoplasmic reticulum membrane. It carries out the reaction hypotaurine + NADPH + O2 + H(+) = taurine + NADP(+) + H2O. The enzyme catalyses hypotaurine + NADH + O2 + H(+) = taurine + NAD(+) + H2O. It catalyses the reaction trimethylamine + NADPH + O2 = trimethylamine N-oxide + NADP(+) + H2O. The catalysed reaction is N,N-dimethylaniline + NADPH + O2 + H(+) = N,N-dimethylaniline N-oxide + NADP(+) + H2O. Broad spectrum monooxygenase that catalyzes the oxygenation of a wide variety of nitrogen- and sulfur-containing compounds including xenobiotics. Catalyzes the S-oxygenation of hypotaurine to produce taurine, an organic osmolyte involved in cell volume regulation as well as a variety of cytoprotective and developmental processes. In vitro, catalyzes the N-oxygenation of trimethylamine (TMA) to produce trimethylamine N-oxide (TMAO) and could therefore participate to the detoxification of this compound that is generated by the action of gut microbiota from dietary precursors such as choline, choline containing compounds, betaine or L-carnitine. In Canis lupus familiaris (Dog), this protein is Flavin-containing monooxygenase 1 (FMO1).